The chain runs to 216 residues: NADH-quinone oxidoreductase subunit C (216 aa).

This sequence belongs to the complex I 30 kDa subunit family. As to quaternary structure, NDH-1 is composed of 14 different subunits. Subunits NuoB, C, D, E, F, and G constitute the peripheral sector of the complex.

It localises to the cell inner membrane. The catalysed reaction is a quinone + NADH + 5 H(+)(in) = a quinol + NAD(+) + 4 H(+)(out). Its function is as follows. NDH-1 shuttles electrons from NADH, via FMN and iron-sulfur (Fe-S) centers, to quinones in the respiratory chain. The immediate electron acceptor for the enzyme in this species is believed to be ubiquinone. Couples the redox reaction to proton translocation (for every two electrons transferred, four hydrogen ions are translocated across the cytoplasmic membrane), and thus conserves the redox energy in a proton gradient. The sequence is that of NADH-quinone oxidoreductase subunit C from Francisella tularensis subsp. holarctica (strain FTNF002-00 / FTA).